A 374-amino-acid polypeptide reads, in one-letter code: Putative glutamate--cysteine ligase 2-2 (374 aa).

Belongs to the glutamate--cysteine ligase type 2 family. YbdK subfamily.

It catalyses the reaction L-cysteine + L-glutamate + ATP = gamma-L-glutamyl-L-cysteine + ADP + phosphate + H(+). In terms of biological role, ATP-dependent carboxylate-amine ligase which exhibits weak glutamate--cysteine ligase activity. The chain is Putative glutamate--cysteine ligase 2-2 from Rhodococcus jostii (strain RHA1).